The chain runs to 421 residues: Subtilisin-like protease 2 (421 aa).

A signal peptide spans 1–16 (MQLLNFGLLLLPFVAG). Positions 17–122 (DLAPQPEPLL…VHPDQHVYLA (106 aa)) are excised as a propeptide. An Inhibitor I9 domain is found at 36–122 (QYIVTLKEGL…VHPDQHVYLA (87 aa)). The Peptidase S8 domain maps to 131–421 (RWGLGYMSSK…ERKFTLPKYF (291 aa)). Active-site charge relay system residues include Asp-169 and His-201. N-linked (GlcNAc...) asparagine glycosylation is found at Asn-248, Asn-261, and Asn-348. Catalysis depends on Ser-357, which acts as the Charge relay system. Residue Asn-388 is glycosylated (N-linked (GlcNAc...) asparagine).

Belongs to the peptidase S8 family.

Its subcellular location is the secreted. In terms of biological role, secreted subtilisin-like serine protease with keratinolytic activity that contributes to pathogenicity. The polypeptide is Subtilisin-like protease 2 (SUB2) (Trichophyton equinum (Horse ringworm fungus)).